We begin with the raw amino-acid sequence, 179 residues long: ATP-dependent protease subunit HslV (179 aa).

The active site involves T6. Positions 164, 167, and 170 each coordinate Na(+).

Belongs to the peptidase T1B family. HslV subfamily. As to quaternary structure, a double ring-shaped homohexamer of HslV is capped on each side by a ring-shaped HslU homohexamer. The assembly of the HslU/HslV complex is dependent on binding of ATP.

The protein localises to the cytoplasm. It carries out the reaction ATP-dependent cleavage of peptide bonds with broad specificity.. Its activity is regulated as follows. Allosterically activated by HslU binding. Functionally, protease subunit of a proteasome-like degradation complex believed to be a general protein degrading machinery. The chain is ATP-dependent protease subunit HslV from Listeria monocytogenes serotype 4b (strain CLIP80459).